Consider the following 571-residue polypeptide: uncharacterized protein (571 aa).

The Cytoplasmic portion of the chain corresponds to 1 to 3 (MNS). Residues 4–24 (LQILSFVGFTLLVAVITWWKV) traverse the membrane as a helical segment. Over 25–74 (RKTDTGSQQGYFLAGRSLKAPVIAASLMLTNLSTEQLVGLSGQAYKSGMS) the chain is Periplasmic. Residues 75–95 (VMGWEVTSAVTLIFLALIFLP) form a helical membrane-spanning segment. The Cytoplasmic segment spans residues 96 to 118 (RYLKRGIATIPDFLEERYDKTTR). Residues 119–139 (IIIDFCFLIATGVCFLPIVLY) traverse the membrane as a helical segment. The Periplasmic portion of the chain corresponds to 140-162 (SGALALNSLFHVGESLQISHGAA). Residues 163 to 183 (IWLLVILLGLAGILYAVIGGL) form a helical membrane-spanning segment. Topologically, residues 184 to 191 (RAMAVADS) are cytoplasmic. The helical transmembrane segment at 192–212 (INGIGLVIGGLMVPVFGLIAM) threads the bilayer. At 213 to 240 (GKGSFMQGIEQLTTVHAEKLNSIGGPTD) the chain is on the periplasmic side. The chain crosses the membrane as a helical span at residues 241 to 261 (PLPIGAAFTGLILVNTFYWCT). At 262 to 283 (NQGIVQRTLASKSLAEGQKGAL) the chain is on the cytoplasmic side. A helical transmembrane segment spans residues 284-304 (LTAVLKMLDPLVLVLPGLIAF). Residues 305–324 (HLYQDLPKADMAYPTLVNNV) lie on the Periplasmic side of the membrane. The helical transmembrane segment at 325–345 (LPVPMVGFFGAVLFGAVISTF) threads the bilayer. Over 346–380 (NGFLNSASTLFSMGIYRRIINQNAEPQQLVTVGRK) the chain is Cytoplasmic. Residues 381–401 (FGFFIAIVSVLVAPWIANAPQ) traverse the membrane as a helical segment. Topologically, residues 402-415 (GLYSWMKQLNGIYN) are periplasmic. A helical membrane pass occupies residues 416-436 (VPLVTIIIMGFFFPRIPALAA). Residue Lys-437 is a topological domain, cytoplasmic. The helical transmembrane segment at 438–458 (VAMGIGIISYITINYLVKFDF) threads the bilayer. Topologically, residues 459 to 460 (HF) are periplasmic. The chain crosses the membrane as a helical span at residues 461–481 (LYVLACTFCINVVVMLVIGFI). The Cytoplasmic segment spans residues 482-505 (KPRATPFTFKDAFAVDMKPWKNVK). Residues 506-526 (IASIGILFAMIGVYAGLAEFG) form a helical membrane-spanning segment. Over 527–532 (GYGTRW) the chain is Periplasmic. Residues 533–553 (LAMISYFIAAVVIVYLIFDSW) traverse the membrane as a helical segment. At 554–571 (RHRHDPAVTFTPDGKDSL) the chain is on the cytoplasmic side.

The protein belongs to the sodium:solute symporter (SSF) (TC 2.A.21) family.

It is found in the cell inner membrane. This is an uncharacterized protein from Escherichia coli (strain K12).